A 470-amino-acid polypeptide reads, in one-letter code: Argininosuccinate lyase (470 aa).

Belongs to the lyase 1 family. Argininosuccinate lyase subfamily.

The protein localises to the cytoplasm. The catalysed reaction is 2-(N(omega)-L-arginino)succinate = fumarate + L-arginine. The protein operates within amino-acid biosynthesis; L-arginine biosynthesis; L-arginine from L-ornithine and carbamoyl phosphate: step 3/3. This Mycobacterium marinum (strain ATCC BAA-535 / M) protein is Argininosuccinate lyase.